A 1111-amino-acid chain; its full sequence is Protein NETWORKED 1C (1111 aa).

The region spanning 13-93 (YSWWWDSHNT…ERYNHATGVI (81 aa)) is the NAB domain. 3 coiled-coil regions span residues 202–287 (SESE…KESS), 314–605 (ERAS…LISE), and 642–752 (KTIG…LESK). The interval 850–870 (TGGGRSMRKQDGGSGRMRKQS) is disordered. A coiled-coil region spans residues 943 to 1009 (NREVNKRRVL…EGEEAIEKLF (67 aa)).

Belongs to the NET family.

In terms of biological role, plant-specific actin binding protein. May be part of a membrane-cytoskeletal adapter complex. The polypeptide is Protein NETWORKED 1C (Arabidopsis thaliana (Mouse-ear cress)).